A 280-amino-acid polypeptide reads, in one-letter code: 4-hydroxy-tetrahydrodipicolinate reductase (280 aa).

NAD(+) contacts are provided by residues glycine 14–methionine 19, aspartate 40, alanine 106–threonine 108, and alanine 130–methionine 133. Catalysis depends on histidine 166, which acts as the Proton donor/acceptor. Histidine 167 is a (S)-2,3,4,5-tetrahydrodipicolinate binding site. Residue lysine 170 is the Proton donor of the active site. Residue glycine 176–threonine 177 coordinates (S)-2,3,4,5-tetrahydrodipicolinate.

It belongs to the DapB family.

The protein resides in the cytoplasm. It carries out the reaction (S)-2,3,4,5-tetrahydrodipicolinate + NAD(+) + H2O = (2S,4S)-4-hydroxy-2,3,4,5-tetrahydrodipicolinate + NADH + H(+). The enzyme catalyses (S)-2,3,4,5-tetrahydrodipicolinate + NADP(+) + H2O = (2S,4S)-4-hydroxy-2,3,4,5-tetrahydrodipicolinate + NADPH + H(+). The protein operates within amino-acid biosynthesis; L-lysine biosynthesis via DAP pathway; (S)-tetrahydrodipicolinate from L-aspartate: step 4/4. Functionally, catalyzes the conversion of 4-hydroxy-tetrahydrodipicolinate (HTPA) to tetrahydrodipicolinate. The polypeptide is 4-hydroxy-tetrahydrodipicolinate reductase (Rhodopirellula baltica (strain DSM 10527 / NCIMB 13988 / SH1)).